Here is a 796-residue protein sequence, read N- to C-terminus: Protein translocase subunit SecA 2 (796 aa).

ATP contacts are provided by residues Gln84, 102 to 106, and Asp496; that span reads GEGKT.

Belongs to the SecA family. Monomer and homodimer (Potential). Part of the accessory SecA2/SecY2 protein translocation apparatus required to export cell wall protein SraP.

The protein localises to the cell membrane. It is found in the cytoplasm. It carries out the reaction ATP + H2O + cellular proteinSide 1 = ADP + phosphate + cellular proteinSide 2.. In terms of biological role, part of the accessory SecA2/SecY2 system specifically required to export SraP, a serine-rich repeat cell wall protein encoded upstream in the same operon. The chain is Protein translocase subunit SecA 2 from Staphylococcus aureus (strain NCTC 8325 / PS 47).